We begin with the raw amino-acid sequence, 65 residues long: MKEIIKFRKKNRQDLNIELLQLLREQFNLRMQSASGKLKQPHLLRKVRKNIAQVKMLLKEKECVK.

It belongs to the universal ribosomal protein uL29 family.

This Buchnera aphidicola subsp. Schizaphis graminum (strain Sg) protein is Large ribosomal subunit protein uL29.